Here is a 399-residue protein sequence, read N- to C-terminus: Enolase (399 aa).

Residue Gln149 participates in (2R)-2-phosphoglycerate binding. Glu191 acts as the Proton donor in catalysis. Asp227, Glu268, and Asp293 together coordinate Mg(2+). Residues Lys318, Arg347, Ser348, and Lys369 each coordinate (2R)-2-phosphoglycerate. Lys318 functions as the Proton acceptor in the catalytic mechanism.

This sequence belongs to the enolase family. Requires Mg(2+) as cofactor.

It localises to the cytoplasm. Its subcellular location is the secreted. The protein localises to the cell surface. It carries out the reaction (2R)-2-phosphoglycerate = phosphoenolpyruvate + H2O. It functions in the pathway carbohydrate degradation; glycolysis; pyruvate from D-glyceraldehyde 3-phosphate: step 4/5. In terms of biological role, catalyzes the reversible conversion of 2-phosphoglycerate (2-PG) into phosphoenolpyruvate (PEP). It is essential for the degradation of carbohydrates via glycolysis. The polypeptide is Enolase (Archaeoglobus fulgidus (strain ATCC 49558 / DSM 4304 / JCM 9628 / NBRC 100126 / VC-16)).